Consider the following 351-residue polypeptide: C-X-C chemokine receptor type 1 (351 aa).

The Extracellular segment spans residues 1–46 (MSNATDPQMGDDDYDLNFTGMPPTDEDYSPCRLETQSLNKYVVIVT). Residues Asn3 and Asn17 are each glycosylated (N-linked (GlcNAc...) asparagine). The helical transmembrane segment at 47–67 (YALVFLLSLLGNSLVMLVILY) threads the bilayer. Over 68–76 (RRVGRSVTD) the chain is Cytoplasmic. A helical transmembrane segment spans residues 77–97 (VYLLNLAMADLLFALTLPIWA). Residues 98 to 112 (ASKVNGWIFGTFLCK) are Extracellular-facing. A disulfide bridge links Cys111 with Cys188. Residues 113 to 133 (VVSLLKEVNFYSGILLLACIS) form a helical membrane-spanning segment. Over 134 to 154 (VDRYLAIVHATRTLIQKRHSV) the chain is Cytoplasmic. The chain crosses the membrane as a helical span at residues 155–175 (KFVCLSCWGLSVILSLPFFLF). Residues 176 to 204 (RQAYHPNNSTPVCYEVLGNDTAKWRMVLR) lie on the Extracellular side of the membrane. N-linked (GlcNAc...) asparagine glycosylation is found at Asn182 and Asn194. A helical transmembrane segment spans residues 205 to 225 (ILPHTFGFTLPLLIMLFCYGF). At 226 to 243 (TLHTLFKAHIGQKHRAMR) the chain is on the cytoplasmic side. Residues 244 to 264 (VIFAVVLIFLLCWLPYNLVLL) traverse the membrane as a helical segment. The Extracellular segment spans residues 265–289 (ADTLMRTHLIKESCERRNDIGRALD). The helical transmembrane segment at 290–310 (ATEILGFLHSCLNPIIYAFIG) threads the bilayer. Over 311 to 351 (QNFRHGFLKILATHGLVSKEFLARHHVTSYTSSSVNVSSNL) the chain is Cytoplasmic.

Belongs to the G-protein coupled receptor 1 family. As to quaternary structure, interacts with IL8. Interacts with GNAI2.

It is found in the cell membrane. Its function is as follows. Receptor to interleukin-8, which is a powerful neutrophils chemotactic factor. Binding of IL-8 to the receptor causes activation of neutrophils. This response is mediated via a G-protein that activates a phosphatidylinositol-calcium second messenger system. In Macaca mulatta (Rhesus macaque), this protein is C-X-C chemokine receptor type 1 (CXCR1).